The following is a 371-amino-acid chain: Ligninase LG2 (371 aa).

The signal sequence occupies residues 1 to 21 (MAFKQLFAAITVALSLTAANA). The propeptide occupies 22 to 28 (AVVKEKR). 4 disulfide bridges follow: cysteine 31–cysteine 43, cysteine 42–cysteine 313, cysteine 62–cysteine 148, and cysteine 277–cysteine 345. Histidine 75 (proton acceptor) is an active-site residue. The Ca(2+) site is built by aspartate 76, glycine 94, aspartate 96, and serine 98. Tryptophan 199 is modified (3-hydroxytryptophan). Histidine 204 lines the heme b pocket. The Ca(2+) site is built by serine 205, aspartate 222, threonine 224, isoleucine 227, and aspartate 229. Asparagine 285 is a glycosylation site (N-linked (GlcNAc...) asparagine).

It belongs to the peroxidase family. Ligninase subfamily. Ca(2+) is required as a cofactor. Heme b serves as cofactor.

It catalyses the reaction 1-(3,4-dimethoxyphenyl)-2-(2-methoxyphenoxy)propane-1,3-diol + H2O2 = 3,4-dimethoxybenzaldehyde + guaiacol + glycolaldehyde + H2O. The enzyme catalyses 2 (3,4-dimethoxyphenyl)methanol + H2O2 = 2 (3,4-dimethoxyphenyl)methanol radical + 2 H2O. It functions in the pathway secondary metabolite metabolism; lignin degradation. Depolymerization of lignin. Catalyzes the C(alpha)-C(beta) cleavage of the propyl side chains of lignin. The sequence is that of Ligninase LG2 (GLG2) from Phanerodontia chrysosporium (White-rot fungus).